A 462-amino-acid chain; its full sequence is Glutamate--tRNA ligase 2 (462 aa).

The 'HIGH' region signature appears at Pro8 to Gly18. A 'KMSKS' region motif is present at residues Pro227–Arg231. Lys230 serves as a coordination point for ATP.

It belongs to the class-I aminoacyl-tRNA synthetase family. Glutamate--tRNA ligase type 1 subfamily. Monomer.

It is found in the cytoplasm. It carries out the reaction tRNA(Glu) + L-glutamate + ATP = L-glutamyl-tRNA(Glu) + AMP + diphosphate. In terms of biological role, catalyzes the attachment of glutamate to tRNA(Glu) in a two-step reaction: glutamate is first activated by ATP to form Glu-AMP and then transferred to the acceptor end of tRNA(Glu). In Thermosipho melanesiensis (strain DSM 12029 / CIP 104789 / BI429), this protein is Glutamate--tRNA ligase 2.